A 440-amino-acid chain; its full sequence is MNPSQILENLKKELSENEYENYLSNLKFNEKQSKADLLVFNAPNELMAKFIQTKYGKKIAHFYEVQSGNKAIINIQAQSAKQSNKSTKIDIAHIKAQSTILNPSFTFDSFVVGDSNKYAYGACKAITHKDKLGKLYNPIFVYGPTGLGKTHLLQAVGNASLEMGKKVIYATSENFINDFTSNLKNGSLDKFHEKYRNCDVLLIDDVQFLGKTDKIQEEFFFIFNEIKNNDGQIIMTSDNPPNMLKGITERLKSRFAHGIIADITPPQLDTKIAIIRKKCEFNDINLSNDIINYIATSLGDNIREIEGIIISLNAYATILGQEITLELAKSVMKDHIKEKKENITIDDILSLVCKEFNIKPSDVKSNKKTQNIVTARRIVIYLARALTALTMPQLANYFEMKDHTAISHNVKKITEMIENDGSLKAKIEELKNKILVKSQS.

The interval 1–74 is domain I, interacts with DnaA modulators; that stretch reads MNPSQILENL…VQSGNKAIIN (74 aa). The segment at 74 to 99 is domain II; that stretch reads NIQAQSAKQSNKSTKIDIAHIKAQST. The segment at 100-316 is domain III, AAA+ region; that stretch reads ILNPSFTFDS…GIIISLNAYA (217 aa). Glycine 146, glycine 148, lysine 149, and threonine 150 together coordinate ATP. The interval 317 to 440 is domain IV, binds dsDNA; it reads TILGQEITLE…KNKILVKSQS (124 aa).

The protein belongs to the DnaA family. In terms of assembly, oligomerizes as a right-handed, spiral filament on DNA at oriC.

The protein localises to the cytoplasm. Plays an essential role in the initiation and regulation of chromosomal replication. ATP-DnaA binds to the origin of replication (oriC) to initiate formation of the DNA replication initiation complex once per cell cycle. Binds the DnaA box (a 9 base pair repeat at the origin) and separates the double-stranded (ds)DNA. Forms a right-handed helical filament on oriC DNA; dsDNA binds to the exterior of the filament while single-stranded (ss)DNA is stabiized in the filament's interior. The ATP-DnaA-oriC complex binds and stabilizes one strand of the AT-rich DNA unwinding element (DUE), permitting loading of DNA polymerase. After initiation quickly degrades to an ADP-DnaA complex that is not apt for DNA replication. Binds acidic phospholipids. The sequence is that of Chromosomal replication initiator protein DnaA from Campylobacter jejuni (strain RM1221).